A 265-amino-acid polypeptide reads, in one-letter code: Indole-3-glycerol phosphate synthase (265 aa).

It belongs to the TrpC family.

The catalysed reaction is 1-(2-carboxyphenylamino)-1-deoxy-D-ribulose 5-phosphate + H(+) = (1S,2R)-1-C-(indol-3-yl)glycerol 3-phosphate + CO2 + H2O. It participates in amino-acid biosynthesis; L-tryptophan biosynthesis; L-tryptophan from chorismate: step 4/5. This Xanthomonas oryzae pv. oryzae (strain MAFF 311018) protein is Indole-3-glycerol phosphate synthase.